A 177-amino-acid polypeptide reads, in one-letter code: Small ribosomal subunit protein uS5 (177 aa).

The S5 DRBM domain maps to 19-82; the sequence is FIEKLVAIKR…DQAQKQMIKV (64 aa).

The protein belongs to the universal ribosomal protein uS5 family. In terms of assembly, part of the 30S ribosomal subunit. Contacts proteins S4 and S8.

Its function is as follows. With S4 and S12 plays an important role in translational accuracy. Functionally, located at the back of the 30S subunit body where it stabilizes the conformation of the head with respect to the body. The sequence is that of Small ribosomal subunit protein uS5 from Magnetococcus marinus (strain ATCC BAA-1437 / JCM 17883 / MC-1).